Reading from the N-terminus, the 65-residue chain is Large ribosomal subunit protein bL35 (65 aa).

The interval 1–22 is disordered; that stretch reads MPKMKTKSSAKKRFKVTGSGKI.

The protein belongs to the bacterial ribosomal protein bL35 family.

The polypeptide is Large ribosomal subunit protein bL35 (Flavobacterium psychrophilum (strain ATCC 49511 / DSM 21280 / CIP 103535 / JIP02/86)).